The sequence spans 197 residues: ATP-dependent Clp protease proteolytic subunit 1 (197 aa).

The active-site Nucleophile is Ser99. Residue His124 is part of the active site.

The protein belongs to the peptidase S14 family. In terms of assembly, fourteen ClpP subunits assemble into 2 heptameric rings which stack back to back to give a disk-like structure with a central cavity, resembling the structure of eukaryotic proteasomes.

It localises to the cytoplasm. The enzyme catalyses Hydrolysis of proteins to small peptides in the presence of ATP and magnesium. alpha-casein is the usual test substrate. In the absence of ATP, only oligopeptides shorter than five residues are hydrolyzed (such as succinyl-Leu-Tyr-|-NHMec, and Leu-Tyr-Leu-|-Tyr-Trp, in which cleavage of the -Tyr-|-Leu- and -Tyr-|-Trp bonds also occurs).. Cleaves peptides in various proteins in a process that requires ATP hydrolysis. Has a chymotrypsin-like activity. Plays a major role in the degradation of misfolded proteins. The sequence is that of ATP-dependent Clp protease proteolytic subunit 1 from Treponema denticola (strain ATCC 35405 / DSM 14222 / CIP 103919 / JCM 8153 / KCTC 15104).